Here is a 146-residue protein sequence, read N- to C-terminus: Angiogenin (146 aa).

The signal sequence occupies residues 1 to 24 (MVMGLGLFLLVFMLGLGLTPPTLA). Glutamine 25 is subject to Pyrrolidone carboxylic acid. Histidine 37 acts as the Proton acceptor in catalysis. Arginine 45 serves as a coordination point for tRNA. 3 disulfide bridges follow: cysteine 50/cysteine 105, cysteine 63/cysteine 116, and cysteine 81/cysteine 131. The short motif at 55-59 (RRRGL) is the Nucleolar localization signal element. 2 residues coordinate tRNA: cysteine 105 and isoleucine 127. Histidine 138 serves as the catalytic Proton donor.

The protein belongs to the pancreatic ribonuclease family. As to quaternary structure, homodimer. Interacts with RNH1; inhibiting ANG ribonuclease activity. Interacts with PCNA.

Its subcellular location is the secreted. It is found in the nucleus. The protein localises to the nucleolus. It localises to the cytoplasm. The protein resides in the stress granule. Its activity is regulated as follows. Has weak tRNA ribonuclease activity by itself due to partial autoinhibition by its C-terminus, which folds into a short alpha-helix that partially occludes the substrate-binding site. In absence of stress, the ribonuclease activity is inhibited by RNH1 in the cytoplasm. In response to stress, dissociates from RNH1 in the cytoplasm and associates with cytoplasmic ribosomes with vacant A-sites: ribosomes directly activate the tRNA ribonuclease activity of ANG by refolding the C-terminal alpha-helix. In response to stress, the angiogenic activity of ANG is inhibited by RNH1 in the nucleus. Its function is as follows. Secreted ribonuclease that can either promote or restrict cell proliferation of target cells, depending on the context. Endocytosed in target cells via its receptor PLXNB2 and translocates to the cytoplasm or nucleus. Under stress conditions, localizes to the cytoplasm and promotes the assembly of stress granules (SGs): specifically cleaves a subset of tRNAs within anticodon loops to produce tRNA-derived stress-induced fragments (tiRNAs), resulting in translation repression and inhibition of cell proliferation. tiRNas also prevent formation of apoptosome, thereby promoting cell survival. Preferentially cleaves RNAs between a pyrimidine and an adenosine residue, suggesting that it cleaves the anticodon loop of tRNA(Ala) (32-UUAGCAU-38) after positions 33 and 36. Cleaves a subset of tRNAs, including tRNA(Ala), tRNA(Glu), tRNA(Gly), tRNA(Lys), tRNA(Val), tRNA(His), tRNA(Asp) and tRNA(Sec). Under growth conditions and in differentiated cells, translocates to the nucleus and stimulates ribosomal RNA (rRNA) transcription, including that containing the initiation site sequences of 45S rRNA, thereby promoting cell growth and proliferation. Angiogenin induces vascularization of normal and malignant tissues via its ability to promote rRNA transcription. Involved in hematopoietic stem and progenitor cell (HSPC) growth and survival by promoting rRNA transcription in growth conditions and inhibiting translation in response to stress, respectively. Mediates the crosstalk between myeloid and intestinal epithelial cells to protect the intestinal epithelial barrier integrity: secreted by myeloid cells and promotes intestinal epithelial cells proliferation and survival. Also mediates osteoclast-endothelial cell crosstalk in growing bone: produced by osteoclasts and protects the neighboring vascular cells against senescence by promoting rRNA transcription. The protein is Angiogenin (ANG) of Rhinopithecus avunculus (Tonkin snub-nosed monkey).